The primary structure comprises 524 residues: Cytochrome P450 52A6 (524 aa).

The chain crosses the membrane as a helical span at residues 17–34 (WYTVITLAALVFLISSNI). Cys-472 is a binding site for heme.

The protein belongs to the cytochrome P450 family. The cofactor is heme.

The protein resides in the membrane. Functionally, together with an NADPH cytochrome P450 the enzyme system catalyzes the terminal hydroxylation as the first step in the assimilation of alkanes and fatty acids. Preferentially hydroxylates hexadecane. This Candida tropicalis (Yeast) protein is Cytochrome P450 52A6 (CYP52A6).